The primary structure comprises 140 residues: Nucleoside diphosphate kinase (140 aa).

The ATP site is built by Lys11, Phe59, Arg87, Thr93, Arg104, and Asn114. The active-site Pros-phosphohistidine intermediate is His117.

It belongs to the NDK family. Homotetramer. Mg(2+) serves as cofactor.

It localises to the cytoplasm. The enzyme catalyses a 2'-deoxyribonucleoside 5'-diphosphate + ATP = a 2'-deoxyribonucleoside 5'-triphosphate + ADP. It catalyses the reaction a ribonucleoside 5'-diphosphate + ATP = a ribonucleoside 5'-triphosphate + ADP. In terms of biological role, major role in the synthesis of nucleoside triphosphates other than ATP. The ATP gamma phosphate is transferred to the NDP beta phosphate via a ping-pong mechanism, using a phosphorylated active-site intermediate. In Ruegeria sp. (strain TM1040) (Silicibacter sp.), this protein is Nucleoside diphosphate kinase.